The primary structure comprises 89 residues: Small ribosomal subunit protein uS15 (89 aa).

It belongs to the universal ribosomal protein uS15 family. In terms of assembly, part of the 30S ribosomal subunit. Forms a bridge to the 50S subunit in the 70S ribosome, contacting the 23S rRNA.

Its function is as follows. One of the primary rRNA binding proteins, it binds directly to 16S rRNA where it helps nucleate assembly of the platform of the 30S subunit by binding and bridging several RNA helices of the 16S rRNA. In terms of biological role, forms an intersubunit bridge (bridge B4) with the 23S rRNA of the 50S subunit in the ribosome. This Vibrio atlanticus (strain LGP32) (Vibrio splendidus (strain Mel32)) protein is Small ribosomal subunit protein uS15.